A 220-amino-acid polypeptide reads, in one-letter code: Splicing factor U2AF 26 kDa subunit (220 aa).

Position 2 is an N-acetylalanine (Ala2). The C3H1-type 1 zinc-finger motif lies at 12 to 40 (EKDKVNCSFYFKIGVCRHGDRCSRLHNKP). The 83-residue stretch at 65–147 (SHCHVSDVEV…QAVHGELSPV (83 aa)) folds into the RRM domain. The C3H1-type 2 zinc finger occupies 149–176 (DFRESCCRQYEMGECTRGGFCNFMHLRP). Residues 185-220 (LYGRGPRRRSPPRFHTGHHPRERNHRCSPDHWHGRF) are disordered. The segment covering 189 to 208 (GPRRRSPPRFHTGHHPRERN) has biased composition (basic residues). Residues 209-220 (HRCSPDHWHGRF) are compositionally biased toward basic and acidic residues.

Belongs to the splicing factor SR family. Interacts with GFI1, U2AF2 and C1QBP. As to expression, isoform 2 is widely expressed. Isoform 3 is highly expressed in heart, brain and lung, lower expressed in thymus and much lower expressed in peripheral blood leukocytes.

It localises to the nucleus. The protein resides in the nucleus speckle. Its subcellular location is the cytoplasm. Its function is as follows. RNA-binding protein that function as a pre-mRNA splicing factor. Plays a critical role in both constitutive and enhancer-dependent splicing by mediating protein-protein interactions and protein-RNA interactions required for accurate 3'-splice site selection. Acts by enhancing the binding of U2AF2 to weak pyrimidine tracts. Also participates in the regulation of alternative pre-mRNA splicing. Activates exon 5 skipping of PTPRC during T-cell activation; an event reversed by GFI1. Binds to RNA at the AG dinucleotide at the 3'-splice site. Shows a preference for AGC or AGA. The protein is Splicing factor U2AF 26 kDa subunit (U2AF1L4) of Homo sapiens (Human).